Consider the following 166-residue polypeptide: Transcription antitermination protein NusB (166 aa).

Over residues 1–18 the composition is skewed to basic and acidic residues; it reads MISDESDRFNPRDPKPAD. Positions 1–28 are disordered; the sequence is MISDESDRFNPRDPKPADAGKPSKSAKR.

The protein belongs to the NusB family.

Involved in transcription antitermination. Required for transcription of ribosomal RNA (rRNA) genes. Binds specifically to the boxA antiterminator sequence of the ribosomal RNA (rrn) operons. The protein is Transcription antitermination protein NusB of Pseudomonas putida (strain GB-1).